The primary structure comprises 401 residues: Methionine import ATP-binding protein MetN (401 aa).

The ABC transporter domain occupies I6 to I248. G45–S52 lines the ATP pocket.

This sequence belongs to the ABC transporter superfamily. Methionine importer (TC 3.A.1.24) family. In terms of assembly, the complex is composed of two ATP-binding proteins (MetN), two transmembrane proteins (MetI) and a solute-binding protein (MetQ).

The protein resides in the cell membrane. It carries out the reaction L-methionine(out) + ATP + H2O = L-methionine(in) + ADP + phosphate + H(+). It catalyses the reaction D-methionine(out) + ATP + H2O = D-methionine(in) + ADP + phosphate + H(+). In terms of biological role, part of the ABC transporter complex MetNIQ involved in methionine import. Responsible for energy coupling to the transport system. The protein is Methionine import ATP-binding protein MetN of Bifidobacterium longum (strain NCC 2705).